A 268-amino-acid polypeptide reads, in one-letter code: Stomatin homolog PYRAB06580 (268 aa).

A helical transmembrane segment spans residues 1–21 (MILPTNFFVTTIILLFILIFL). Coiled coils occupy residues 125-152 (GQAH…EATD) and 178-213 (KQAE…ISEH).

It belongs to the band 7/mec-2 family. Homotrimer.

Its subcellular location is the membrane. This chain is Stomatin homolog PYRAB06580, found in Pyrococcus abyssi (strain GE5 / Orsay).